A 258-amino-acid chain; its full sequence is Peptidase inhibitor 15 (258 aa).

Positions methionine 1–threonine 21 are cleaved as a signal peptide. The propeptide occupies valine 22–arginine 60. N-linked (GlcNAc...) asparagine glycosylation is found at asparagine 36 and asparagine 124. Residues leucine 71 to tyrosine 211 form the SCP domain.

It belongs to the CRISP family. In terms of processing, N-glycosylated. In terms of tissue distribution, weakly expressed. Expressed at low level in prostate, mammary gland, salivary gland and thyroid gland.

It localises to the secreted. Its function is as follows. Serine protease inhibitor which displays weak inhibitory activity against trypsin. May play a role in facial patterning during embryonic development. The sequence is that of Peptidase inhibitor 15 (Pi15) from Mus musculus (Mouse).